Here is a 158-residue protein sequence, read N- to C-terminus: NADH-quinone oxidoreductase subunit B (158 aa).

Positions 37, 38, 102, and 132 each coordinate [4Fe-4S] cluster.

Belongs to the complex I 20 kDa subunit family. NDH-1 is composed of 14 different subunits. Subunits NuoB, C, D, E, F, and G constitute the peripheral sector of the complex. [4Fe-4S] cluster is required as a cofactor.

It is found in the cell inner membrane. The enzyme catalyses a quinone + NADH + 5 H(+)(in) = a quinol + NAD(+) + 4 H(+)(out). Functionally, NDH-1 shuttles electrons from NADH, via FMN and iron-sulfur (Fe-S) centers, to quinones in the respiratory chain. Couples the redox reaction to proton translocation (for every two electrons transferred, four hydrogen ions are translocated across the cytoplasmic membrane), and thus conserves the redox energy in a proton gradient. In Legionella pneumophila (strain Paris), this protein is NADH-quinone oxidoreductase subunit B.